A 210-amino-acid polypeptide reads, in one-letter code: Thymidylate kinase (210 aa).

ATP is bound at residue 16–23 (GGDGVGKS).

This sequence belongs to the thymidylate kinase family.

The catalysed reaction is dTMP + ATP = dTDP + ADP. In terms of biological role, phosphorylation of dTMP to form dTDP in both de novo and salvage pathways of dTTP synthesis. The sequence is that of Thymidylate kinase from Leifsonia xyli subsp. xyli (strain CTCB07).